Here is a 273-residue protein sequence, read N- to C-terminus: Dermonecrotic toxin LhSicTox-alphaIA1iii (273 aa).

Histidine 5 is an active-site residue. 2 residues coordinate Mg(2+): glutamate 25 and aspartate 27. Histidine 41 functions as the Nucleophile in the catalytic mechanism. 2 disulfides stabilise this stretch: cysteine 45–cysteine 51 and cysteine 47–cysteine 190. Aspartate 85 contacts Mg(2+).

This sequence belongs to the arthropod phospholipase D family. Class II subfamily. Mg(2+) is required as a cofactor. As to expression, expressed by the venom gland.

It localises to the secreted. The enzyme catalyses an N-(acyl)-sphingosylphosphocholine = an N-(acyl)-sphingosyl-1,3-cyclic phosphate + choline. It catalyses the reaction an N-(acyl)-sphingosylphosphoethanolamine = an N-(acyl)-sphingosyl-1,3-cyclic phosphate + ethanolamine. The catalysed reaction is a 1-acyl-sn-glycero-3-phosphocholine = a 1-acyl-sn-glycero-2,3-cyclic phosphate + choline. It carries out the reaction a 1-acyl-sn-glycero-3-phosphoethanolamine = a 1-acyl-sn-glycero-2,3-cyclic phosphate + ethanolamine. In terms of biological role, dermonecrotic toxins cleave the phosphodiester linkage between the phosphate and headgroup of certain phospholipids (sphingolipid and lysolipid substrates), forming an alcohol (often choline) and a cyclic phosphate. This toxin acts on sphingomyelin (SM). It may also act on ceramide phosphoethanolamine (CPE), lysophosphatidylcholine (LPC) and lysophosphatidylethanolamine (LPE), but not on lysophosphatidylserine (LPS), and lysophosphatidylglycerol (LPG). It acts by transphosphatidylation, releasing exclusively cyclic phosphate products as second products. Induces dermonecrosis, hemolysis, increased vascular permeability, edema, inflammatory response, and platelet aggregation. The polypeptide is Dermonecrotic toxin LhSicTox-alphaIA1iii (Loxosceles hirsuta (Recluse spider)).